The sequence spans 374 residues: Envelope glycoprotein M (374 aa).

The Intravirion portion of the chain corresponds to 1–16; that stretch reads MKSSKKDIFILHIWLK. The helical transmembrane segment at 17 to 37 threads the bilayer; that stretch reads LMGCYVFMFITSVVLPIAAMF. Residues 38–82 are Virion surface-facing; it reads PNLGFPCYYNTLVDYSKLNLREKNQAQHLTPTLFLEAPEMFFYVT. Residues 83-103 form a helical membrane-spanning segment; it reads YSFIVDCCSLVYYALAAVAVV. The Intravirion segment spans residues 104–117; it reads KAKKHAPGLMALSQ. The chain crosses the membrane as a helical span at residues 118–138; the sequence is WIMAVGSPTLLYMAVLKLWTI. The Virion surface portion of the chain corresponds to 139–149; sequence QLYIHTLSYKH. Residues 150-170 form a helical membrane-spanning segment; the sequence is IYLAAFVYCLHWLLSMVYTEC. The Intravirion segment spans residues 171-207; the sequence is YITNVSSQWTSSELKKTIPENILLYRVVHVLKPIMMN. A helical membrane pass occupies residues 208-228; that stretch reads VHLSVVALETLIFCLSFMMAI. Residues 229–238 lie on the Virion surface side of the membrane; the sequence is GNSFYVMVSD. A helical transmembrane segment spans residues 239-259; sequence IVFGAINLYLILPIIWYFVTE. At 260 to 269 the chain is on the intravirion side; it reads FWLSKYLPRQ. Residues 270 to 290 traverse the membrane as a helical segment; the sequence is FGFYFGVLVASIILILPVVRY. Residues 291–301 are Virion surface-facing; sequence DKIFVAAQIHR. A helical membrane pass occupies residues 302–322; it reads AVSINIAMIPLCALVALLVRA. At 323-374 the chain is on the intravirion side; it reads CRVYTDRKKIAYTALPSKPQTIKYTKPIEPSTKQAPDSSIFLEEESDTDFEQ. The segment at 345–374 is disordered; that stretch reads KYTKPIEPSTKQAPDSSIFLEEESDTDFEQ. Over residues 364–374 the composition is skewed to acidic residues; that stretch reads LEEESDTDFEQ.

Belongs to the herpesviridae glycoprotein M family. Interacts (via N-terminus) with gN (via N-terminus). The gM-gN heterodimer forms the gCII complex.

Its subcellular location is the virion membrane. It localises to the host Golgi apparatus. It is found in the host trans-Golgi network. The protein resides in the host endosome membrane. The protein localises to the host nucleus inner membrane. Envelope glycoprotein important for virion assembly and egress. Plays a role in the correct incorporation of gH-gL into virion membrane. Directs the glycoprotein N (gN) to the host trans-Golgi network. The polypeptide is Envelope glycoprotein M (Connochaetes taurinus (Blue wildebeest)).